A 206-amino-acid chain; its full sequence is Holliday junction branch migration complex subunit RuvA (206 aa).

The segment at 1–64 (MIAKLTGLLD…EDNIQLFGFA (64 aa)) is domain I. Positions 65-143 (DTEERDWFRL…SFGAPAPAAA (79 aa)) are domain II. A flexible linker region spans residues 144–154 (TAGKGGAAPAG). A domain III region spans residues 154–206 (GPAGAVADAVSALVNLGYRRVEAFTAVNAVAQRLGPEAGVSDLIRAGLKELSP).

The protein belongs to the RuvA family. As to quaternary structure, homotetramer. Forms an RuvA(8)-RuvB(12)-Holliday junction (HJ) complex. HJ DNA is sandwiched between 2 RuvA tetramers; dsDNA enters through RuvA and exits via RuvB. An RuvB hexamer assembles on each DNA strand where it exits the tetramer. Each RuvB hexamer is contacted by two RuvA subunits (via domain III) on 2 adjacent RuvB subunits; this complex drives branch migration. In the full resolvosome a probable DNA-RuvA(4)-RuvB(12)-RuvC(2) complex forms which resolves the HJ.

Its subcellular location is the cytoplasm. The RuvA-RuvB-RuvC complex processes Holliday junction (HJ) DNA during genetic recombination and DNA repair, while the RuvA-RuvB complex plays an important role in the rescue of blocked DNA replication forks via replication fork reversal (RFR). RuvA specifically binds to HJ cruciform DNA, conferring on it an open structure. The RuvB hexamer acts as an ATP-dependent pump, pulling dsDNA into and through the RuvAB complex. HJ branch migration allows RuvC to scan DNA until it finds its consensus sequence, where it cleaves and resolves the cruciform DNA. The chain is Holliday junction branch migration complex subunit RuvA from Rhodospirillum centenum (strain ATCC 51521 / SW).